A 292-amino-acid polypeptide reads, in one-letter code: MLSGSIVALLTPFKADGEVDFDGLQKLVEYHIAAGTNGIVAVGTTGESSTLTVEEHVKVVNKTVEFVNGRIPVIAGTGANATHESVTFSRLLNDSGIDACLSVTPYYNKPTQEGLFQHYKAIAEVSNVPQILYNVPGRTAVDLLPEPVARLAELENIVALKDATGDLNRVAIHRELCGEDFILLSGDDATGLDFVKLGGQGVISVTNNIAAKDMADMFRLALEGRFEEAEVINQRLMPLHKNLFIESSPIPVKWAATQLGLIECGHLRLPLTELSEKCHPIVAQAMTDAGIY.

T45 is a binding site for pyruvate. Y133 (proton donor/acceptor) is an active-site residue. Residue K161 is the Schiff-base intermediate with substrate of the active site. I203 lines the pyruvate pocket.

It belongs to the DapA family. In terms of assembly, homotetramer; dimer of dimers.

Its subcellular location is the cytoplasm. The enzyme catalyses L-aspartate 4-semialdehyde + pyruvate = (2S,4S)-4-hydroxy-2,3,4,5-tetrahydrodipicolinate + H2O + H(+). It functions in the pathway amino-acid biosynthesis; L-lysine biosynthesis via DAP pathway; (S)-tetrahydrodipicolinate from L-aspartate: step 3/4. In terms of biological role, catalyzes the condensation of (S)-aspartate-beta-semialdehyde [(S)-ASA] and pyruvate to 4-hydroxy-tetrahydrodipicolinate (HTPA). The chain is 4-hydroxy-tetrahydrodipicolinate synthase from Vibrio vulnificus (strain CMCP6).